Here is a 299-residue protein sequence, read N- to C-terminus: tRNA pseudouridine synthase B (299 aa).

Asp45 acts as the Nucleophile in catalysis.

Belongs to the pseudouridine synthase TruB family. Type 1 subfamily.

The enzyme catalyses uridine(55) in tRNA = pseudouridine(55) in tRNA. Responsible for synthesis of pseudouridine from uracil-55 in the psi GC loop of transfer RNAs. In Streptomyces griseus subsp. griseus (strain JCM 4626 / CBS 651.72 / NBRC 13350 / KCC S-0626 / ISP 5235), this protein is tRNA pseudouridine synthase B.